The following is a 24-amino-acid chain: Small ribosomal subunit protein uS19 (24 aa).

The segment at 1-24 is disordered; that stretch reads KLGEFSPTRTYRGHNKKDKKMQKK. Residues 11–24 show a composition bias toward basic residues; sequence YRGHNKKDKKMQKK.

Belongs to the universal ribosomal protein uS19 family.

Its function is as follows. Protein S19 forms a complex with S13 that binds strongly to the 16S ribosomal RNA. In Phytoplasma sp. (strain STRAWB2), this protein is Small ribosomal subunit protein uS19.